The chain runs to 345 residues: Putative pyridoxal reductase (345 aa).

Tyr60 acts as the Proton donor in catalysis.

This sequence belongs to the aldo/keto reductase family.

The protein localises to the cytoplasm. The protein resides in the nucleus. The catalysed reaction is pyridoxine + NADP(+) = pyridoxal + NADPH + H(+). It participates in cofactor degradation; B6 vitamer degradation; pyridoxal from pyridoxine (dehydrogenase route): step 1/1. Its function is as follows. Catalyzes the reduction of pyridoxal (PL) with NADPH and oxidation of pyridoxine (PN) with NADP(+). The protein is Putative pyridoxal reductase of Saccharomyces cerevisiae (strain ATCC 204508 / S288c) (Baker's yeast).